We begin with the raw amino-acid sequence, 286 residues long: MWGEKMDPLSGFISSLIWWLLFFYLIMAPQIQYKQLQLARLKILRELSNKRNSTVITMIHRQESIGLFGIPVYKFITIEDSEEILRAIRAAPKDKPIDLIIHTPGGLVLAATQIAKALKAHPAETRVIVPHYAMSGGTLIALAADKIIMDENAVLGPVDPQLGQYPAPSIVKAVEQKGADKADDQTLILADIAKKAINQVQNFVYNLLKDKYGEEKAKELSKILTEGRWTHDYPITVEEAKELGLDVDTNVPEEVYTLMELYKQPVRQRGTVEFMPYPVKQENGAK.

Residues 8 to 28 (PLSGFISSLIWWLLFFYLIMA) form a helical membrane-spanning segment.

The protein to M.jannaschii MJ1495.

The protein localises to the membrane. This is an uncharacterized protein from Methanocaldococcus jannaschii (strain ATCC 43067 / DSM 2661 / JAL-1 / JCM 10045 / NBRC 100440) (Methanococcus jannaschii).